The following is a 514-amino-acid chain: RNA-splicing ligase RtcB homolog (514 aa).

The Mn(2+) site is built by D128, C131, H236, H268, and H362. 235 to 239 (NHYAE) is a binding site for GMP. Residues 362 to 363 (HN), 411 to 414 (GGTM), S418, 437 to 440 (HGAG), and K513 each bind GMP. Residue H437 is the GMP-histidine intermediate of the active site.

This sequence belongs to the RtcB family. Catalytic component of the tRNA-splicing ligase complex. Mn(2+) serves as cofactor.

The catalysed reaction is a 3'-end 3'-phospho-ribonucleotide-RNA + a 5'-end dephospho-ribonucleoside-RNA + GTP = a ribonucleotidyl-ribonucleotide-RNA + GMP + diphosphate. It catalyses the reaction a 3'-end 2',3'-cyclophospho-ribonucleotide-RNA + a 5'-end dephospho-ribonucleoside-RNA + GTP + H2O = a ribonucleotidyl-ribonucleotide-RNA + GMP + diphosphate + H(+). In terms of biological role, catalytic subunit of the tRNA-splicing ligase complex that acts by directly joining spliced tRNA halves to mature-sized tRNAs by incorporating the precursor-derived splice junction phosphate into the mature tRNA as a canonical 3',5'-phosphodiester. May act as an RNA ligase with broad substrate specificity, and may function toward other RNAs. In Ostreococcus lucimarinus (strain CCE9901), this protein is RNA-splicing ligase RtcB homolog.